Here is a 420-residue protein sequence, read N- to C-terminus: UDP-N-acetylglucosamine 1-carboxyvinyltransferase (420 aa).

22–23 contributes to the phosphoenolpyruvate binding site; the sequence is KN. Residue Arg-93 participates in UDP-N-acetyl-alpha-D-glucosamine binding. The active-site Proton donor is Cys-117. A 2-(S-cysteinyl)pyruvic acid O-phosphothioketal modification is found at Cys-117. UDP-N-acetyl-alpha-D-glucosamine is bound by residues Asp-307 and Ile-329.

The protein belongs to the EPSP synthase family. MurA subfamily.

It localises to the cytoplasm. It carries out the reaction phosphoenolpyruvate + UDP-N-acetyl-alpha-D-glucosamine = UDP-N-acetyl-3-O-(1-carboxyvinyl)-alpha-D-glucosamine + phosphate. The protein operates within cell wall biogenesis; peptidoglycan biosynthesis. Cell wall formation. Adds enolpyruvyl to UDP-N-acetylglucosamine. The sequence is that of UDP-N-acetylglucosamine 1-carboxyvinyltransferase from Alteromonas mediterranea (strain DSM 17117 / CIP 110805 / LMG 28347 / Deep ecotype).